The primary structure comprises 115 residues: Large ribosomal subunit protein bL20 (115 aa).

It belongs to the bacterial ribosomal protein bL20 family.

Binds directly to 23S ribosomal RNA and is necessary for the in vitro assembly process of the 50S ribosomal subunit. It is not involved in the protein synthesizing functions of that subunit. In Chlorobium phaeobacteroides (strain DSM 266 / SMG 266 / 2430), this protein is Large ribosomal subunit protein bL20.